Here is a 141-residue protein sequence, read N- to C-terminus: Nucleoside diphosphate kinase (141 aa).

ATP-binding residues include Lys-11, Phe-59, Arg-87, Thr-93, Arg-104, and Asn-114. Catalysis depends on His-117, which acts as the Pros-phosphohistidine intermediate.

Belongs to the NDK family. Homotetramer. Mg(2+) is required as a cofactor.

The protein localises to the cytoplasm. The enzyme catalyses a 2'-deoxyribonucleoside 5'-diphosphate + ATP = a 2'-deoxyribonucleoside 5'-triphosphate + ADP. It carries out the reaction a ribonucleoside 5'-diphosphate + ATP = a ribonucleoside 5'-triphosphate + ADP. Major role in the synthesis of nucleoside triphosphates other than ATP. The ATP gamma phosphate is transferred to the NDP beta phosphate via a ping-pong mechanism, using a phosphorylated active-site intermediate. The protein is Nucleoside diphosphate kinase of Acidithiobacillus ferrooxidans (strain ATCC 53993 / BNL-5-31) (Leptospirillum ferrooxidans (ATCC 53993)).